The chain runs to 437 residues: Probable exopolygalacturonase C (437 aa).

A signal peptide spans 1 to 21 (MLITKTAFLAFLLSSVPLAHG). Residues Asn-25, Asn-42, Asn-82, Asn-99, and Asn-149 are each glycosylated (N-linked (GlcNAc...) asparagine). PbH1 repeat units lie at residues 215 to 236 (GTNIRISDSIMYNGDDAIAVGS) and 238 to 259 (SHNIVFERNTIGYQSHGMSIGS). Catalysis depends on Asp-229, which acts as the Proton donor. His-253 is an active-site residue. N-linked (GlcNAc...) asparagine glycosylation occurs at Asn-269. PbH1 repeat units follow at residues 270–291 (ITNLRFEDVTVIDALYAARFKS) and 299–320 (VKNVTWKNIRVYNVTFPIFVTQ). Asn-301 and Asn-311 each carry an N-linked (GlcNAc...) asparagine glycan. Cys-386 and Cys-392 are oxidised to a cystine. 2 N-linked (GlcNAc...) asparagine glycosylation sites follow: Asn-428 and Asn-431.

Belongs to the glycosyl hydrolase 28 family.

It is found in the secreted. It catalyses the reaction [(1-&gt;4)-alpha-D-galacturonosyl](n) + H2O = alpha-D-galacturonate + [(1-&gt;4)-alpha-D-galacturonosyl](n-1). In terms of biological role, specific in hydrolyzing the terminal glycosidic bond of polygalacturonic acid and oligogalacturonates. In Aspergillus flavus (strain ATCC 200026 / FGSC A1120 / IAM 13836 / NRRL 3357 / JCM 12722 / SRRC 167), this protein is Probable exopolygalacturonase C (pgxC).